We begin with the raw amino-acid sequence, 450 residues long: Glucose-6-phosphate isomerase (450 aa).

Glu-291 functions as the Proton donor in the catalytic mechanism. Residues His-312 and Lys-426 contribute to the active site.

It belongs to the GPI family.

It is found in the cytoplasm. It catalyses the reaction alpha-D-glucose 6-phosphate = beta-D-fructose 6-phosphate. It functions in the pathway carbohydrate biosynthesis; gluconeogenesis. Its pathway is carbohydrate degradation; glycolysis; D-glyceraldehyde 3-phosphate and glycerone phosphate from D-glucose: step 2/4. Functionally, catalyzes the reversible isomerization of glucose-6-phosphate to fructose-6-phosphate. This Clostridium botulinum (strain Loch Maree / Type A3) protein is Glucose-6-phosphate isomerase.